Consider the following 371-residue polypeptide: Probable inactive methyltransferase Os04g0175900 (371 aa).

Residue 137–143 coordinates substrate; it reads LDVDEDN. Positions 170 to 188 are substrate binding; sequence LFEYMGTNHRFNMLFNQAM. Positions 216, 239, 260, and 273 each coordinate S-adenosyl-L-methionine.

Belongs to the class I-like SAM-binding methyltransferase superfamily. Cation-independent O-methyltransferase family. COMT subfamily.

The polypeptide is Probable inactive methyltransferase Os04g0175900 (Oryza sativa subsp. japonica (Rice)).